Reading from the N-terminus, the 446-residue chain is Neuropeptide Y receptor type 5 (446 aa).

At 1 to 42 (MDLELQDFYNKTLATENNTAATRNSDFPVWDDYKSSVDDLQY) the chain is on the extracellular side. N-linked (GlcNAc...) asparagine glycans are attached at residues asparagine 10 and asparagine 17. A helical membrane pass occupies residues 43-63 (FLIGLYTFVSLLGFMGNLLIL). Residues 64 to 77 (MALMRKRNQKTMVN) are Cytoplasmic-facing. Residues 78–98 (FLIGNLAFSDILVVLFCSPFT) form a helical membrane-spanning segment. Over 99–117 (LTSVLLDQWMFGKVMCHIM) the chain is Extracellular. The cysteines at positions 114 and 198 are disulfide-linked. Residues 118–138 (PFLQCVSVLVSTLILISIAIV) traverse the membrane as a helical segment. The Cytoplasmic segment spans residues 139 to 156 (RYHMIKHPISNNLTANHG). Residues 157–177 (YFLIATVWTLGFAICSPLPVF) traverse the membrane as a helical segment. The Extracellular segment spans residues 178 to 208 (HSLVELQETFDSALLSSRYLCVESWPSDSYR). The chain crosses the membrane as a helical span at residues 209 to 229 (IAFTISLLLVQYILPLVCLTV). At 230 to 369 (SHTSVCRSIS…KKRSRSVFYR (140 aa)) the chain is on the cytoplasmic side. A helical membrane pass occupies residues 370-390 (LTILILVFAVSWMPLHLFHVV). Residues 391–407 (TDFNDNLISNRHFKLVY) lie on the Extracellular side of the membrane. Residues 408 to 428 (CICHLLGMMSCCLNPILYGFL) traverse the membrane as a helical segment. Residues 429–446 (NNGIKADLISLIQCLHMS) lie on the Cytoplasmic side of the membrane. A lipid anchor (S-palmitoyl cysteine) is attached at cysteine 442.

The protein belongs to the G-protein coupled receptor 1 family.

The protein resides in the cell membrane. In terms of biological role, receptor for neuropeptide Y and peptide YY. The activity of this receptor is mediated by G proteins that inhibit adenylate cyclase activity. Seems to be associated with food intake. Could be involved in feeding disorders. The protein is Neuropeptide Y receptor type 5 (NPY5R) of Canis lupus familiaris (Dog).